Here is a 648-residue protein sequence, read N- to C-terminus: Macrolide export ATP-binding/permease protein MacB (648 aa).

Residues 1–272 are Cytoplasmic-facing; it reads MTPLLELKDI…RALAANKMRT (272 aa). The 239-residue stretch at 5 to 243 folds into the ABC transporter domain; that stretch reads LELKDIRRSY…TGGTEPVVNT (239 aa). 41–48 lines the ATP pocket; that stretch reads GASGSGKS. The chain crosses the membrane as a helical span at residues 273-293; sequence LLTMLGIIIGIASVVSIVVVG. The Periplasmic segment spans residues 294-522; sequence DAAKQMVLAD…TVEKTTRTLQ (229 aa). A helical transmembrane segment spans residues 523–543; that stretch reads LFLTLVAVISLVVGGIGVMNI. Topologically, residues 544 to 575 are cytoplasmic; that stretch reads MLVSVTERTREIGIRMAVGARASDVLQQFLIE. The chain crosses the membrane as a helical span at residues 576 to 596; the sequence is AVLVCLVGGALGITLSLLIAF. The Periplasmic segment spans residues 597-610; the sequence is TLQLFLPGWEIGFS. Residues 611–631 form a helical membrane-spanning segment; it reads PLALLLAFLCSTVTGILFGWL. Topologically, residues 632–648 are cytoplasmic; the sequence is PARNAARLDPVDALARE.

This sequence belongs to the ABC transporter superfamily. Macrolide exporter (TC 3.A.1.122) family. In terms of assembly, homodimer. Part of the tripartite efflux system MacAB-TolC, which is composed of an inner membrane transporter, MacB, a periplasmic membrane fusion protein, MacA, and an outer membrane component, TolC. The complex forms a large protein conduit and can translocate molecules across both the inner and outer membranes. Interacts with MacA.

It localises to the cell inner membrane. ATPase activity is stimulated by interaction with MacA and inhibited by vanadate. Part of the tripartite efflux system MacAB-TolC. MacB is a non-canonical ABC transporter that contains transmembrane domains (TMD), which form a pore in the inner membrane, and an ATP-binding domain (NBD), which is responsible for energy generation. When overexpressed, the system confers resistance against macrolides composed of 14- and 15-membered lactones but no or weak resistance against 16-membered ones. In addition, the system could also transport R-LPS or a similar glycolipid. The polypeptide is Macrolide export ATP-binding/permease protein MacB (Escherichia coli (strain K12)).